Consider the following 373-residue polypeptide: Ribosomal RNA small subunit methyltransferase H (373 aa).

S-adenosyl-L-methionine is bound by residues Gly92–His94, Asp111, Tyr138, Asp159, and Gln166. Basic and acidic residues-rich tracts occupy residues Ala343 to Pro355 and Arg363 to Ser373. The disordered stretch occupies residues Ala343–Ser373.

This sequence belongs to the methyltransferase superfamily. RsmH family.

The protein localises to the cytoplasm. The enzyme catalyses cytidine(1402) in 16S rRNA + S-adenosyl-L-methionine = N(4)-methylcytidine(1402) in 16S rRNA + S-adenosyl-L-homocysteine + H(+). Specifically methylates the N4 position of cytidine in position 1402 (C1402) of 16S rRNA. The polypeptide is Ribosomal RNA small subunit methyltransferase H (Mycolicibacterium smegmatis (strain ATCC 700084 / mc(2)155) (Mycobacterium smegmatis)).